A 392-amino-acid chain; its full sequence is Chaperone protein DnaJ (392 aa).

Positions 2 to 67 (DYYSILGISK…QKRDSYDRFG (66 aa)) constitute a J domain. A CR-type zinc finger spans residues 148 to 226 (GVEKELVVSG…CRGQGRVKDK (79 aa)). Cys161, Cys164, Cys178, Cys181, Cys200, Cys203, Cys214, and Cys217 together coordinate Zn(2+). CXXCXGXG motif repeat units follow at residues 161–168 (CETCSGQG), 178–185 (CERCKGSG), 200–207 (CPECGGEG), and 214–221 (CSSCRGQG).

This sequence belongs to the DnaJ family. Homodimer. Zn(2+) is required as a cofactor.

Its subcellular location is the cytoplasm. In terms of biological role, participates actively in the response to hyperosmotic and heat shock by preventing the aggregation of stress-denatured proteins and by disaggregating proteins, also in an autonomous, DnaK-independent fashion. Unfolded proteins bind initially to DnaJ; upon interaction with the DnaJ-bound protein, DnaK hydrolyzes its bound ATP, resulting in the formation of a stable complex. GrpE releases ADP from DnaK; ATP binding to DnaK triggers the release of the substrate protein, thus completing the reaction cycle. Several rounds of ATP-dependent interactions between DnaJ, DnaK and GrpE are required for fully efficient folding. Also involved, together with DnaK and GrpE, in the DNA replication of plasmids through activation of initiation proteins. In Chlamydia pneumoniae (Chlamydophila pneumoniae), this protein is Chaperone protein DnaJ.